The following is an 83-amino-acid chain: U5-theraphotoxin-Hs1a 4 (83 aa).

The N-terminal stretch at 1–21 is a signal peptide; the sequence is MKTSMFLTLTGLVLLFVDCYA. The propeptide occupies 22–49; it reads SESEEKEFPKELLSSIFAADSDFKVEER. Cystine bridges form between Cys51–Cys63, Cys56–Cys68, and Cys62–Cys75.

The protein belongs to the neurotoxin 10 (Hwtx-1) family. 51 (Hntx-8) subfamily. Hntx-8 sub-subfamily. As to expression, expressed by the venom gland.

Its subcellular location is the secreted. Its function is as follows. Agglutinates erythrocytes. In Cyriopagopus schmidti (Chinese bird spider), this protein is U5-theraphotoxin-Hs1a 4.